Consider the following 519-residue polypeptide: Membrane-bound transcription factor site-2 protease (519 aa).

The Cytoplasmic segment spans residues 1 to 3; the sequence is MIP. The chain crosses the membrane as a helical span at residues 4–24; that stretch reads VSLVVVVVGGWTVVYLTDLVL. Residues 25–74 lie on the Lumenal side of the membrane; it reads KSSVYFKHSYEDWLENNGLSISPFHIRWQTAVFNRAFYSWGRRKARMLYQ. A run of 2 helical transmembrane segments spans residues 75–95 and 96–107; these read WFNF…FLLG and KTLMQTLAQMMA. Topologically, residues 108–144 are lumenal; it reads DSPSSYSSSSSSSSSSSSSSSSSSSSSSSLHNEQVLQ. The disordered stretch occupies residues 115 to 135; sequence SSSSSSSSSSSSSSSSSSSSS. The chain crosses the membrane as a helical span at residues 145–169; the sequence is VVVPGINLPVNQLTYFFTAVLISGV. His171 is a Zn(2+) binding site. Glu172 is an active-site residue. 3 helical membrane-spanning segments follow: residues 174–186, 187–209, and 229–251; these read GHGI…QVRF, NGFG…TTHL, and FVLA…PFYY. His175 is a Zn(2+) binding site. The Lumenal segment spans residues 252-446; it reads TGVGVLITEV…LPVVVETFVK (195 aa). The N-linked (GlcNAc...) asparagine glycan is linked to Asn337. Transmembrane regions (helical) follow at residues 447–464 and 465–476; these read YLIS…VPCF and ALDGQWILNSFL. Residues 477-492 lie on the Lumenal side of the membrane; the sequence is DATLTSVIGDNDVKDL. The helical transmembrane segment at 493–513 threads the bilayer; it reads IGFFILLGGSVLLAANVTLGL. Residues 514–519 lie on the Cytoplasmic side of the membrane; the sequence is WMVTAR.

The protein belongs to the peptidase M50A family. The cofactor is Zn(2+). Expressed in heart, brain, placenta, lung, liver, muscle, kidney and pancreas.

The protein resides in the membrane. The protein localises to the cytoplasm. It localises to the golgi apparatus membrane. The catalysed reaction is Cleaves several transcription factors that are type-2 transmembrane proteins within membrane-spanning domains. Known substrates include sterol regulatory element-binding protein (SREBP) -1, SREBP-2 and forms of the transcriptional activator ATF6. SREBP-2 is cleaved at the site 477-DRSRILL-|-CVLTFLCLSFNPLTSLLQWGGA-505. The residues Asn-Pro, 11 residues distal to the site of cleavage in the membrane-spanning domain, are important for cleavage by S2P endopeptidase. Replacement of either of these residues does not prevent cleavage, but there is no cleavage if both of these residues are replaced.. Functionally, zinc metalloprotease that mediates intramembrane proteolysis of proteins such as ATF6, ATF6B, SREBF1/SREBP1 and SREBF2/SREBP2. Catalyzes the second step in the proteolytic activation of the sterol regulatory element-binding proteins (SREBPs) SREBF1/SREBP1 and SREBF2/SREBP2: cleaves SREBPs within the first transmembrane segment, thereby releasing the N-terminal segment with a portion of the transmembrane segment attached. Mature N-terminal SREBP fragments shuttle to the nucleus and activate gene transcription. Also mediates the second step in the proteolytic activation of the cyclic AMP-dependent transcription factor ATF-6 (ATF6 and ATF6B). Involved in intramembrane proteolysis during bone formation. In astrocytes and osteoblasts, upon DNA damage and ER stress, mediates the second step of the regulated intramembrane proteolytic activation of the transcription factor CREB3L1, leading to the inhibition of cell-cycle progression. The chain is Membrane-bound transcription factor site-2 protease from Homo sapiens (Human).